The sequence spans 454 residues: MTSNGTNGSATAYHASSTQEAIQAENDFAAHNYHPLPVVFARAQGTSVWDPEGRHYLDFLSAYSAVNQGHCHPKLVAALVDQASRLTLSSRAFYNDVFPKFAEMVTKYFGFDMVLPMNTGAEAVETGIKIARKWGYKVKGIPENEAIILSAENNFHGRTMAAISLSSDPESRENYGPYVPNIGCTIPGTEKPITYNDKAALREAFEKAGSNLAAFLVEPIQGEAGIIVPDDDYLQLARSLCDQHNVLLICDEIQTGIARTGKLLCHEWSGIKPDMVLLGKAISGGMYPVSCVLGRKDVMLTVEPGTHGSTYGGNPLACAVAIRALEVVQEENMVERAEKLGQAFRSGLEAIQNPIIQTVRGKGLLNAIVIDESKTNGHTAWDLCMLMKEKGLLAKPTHQNIIRLAPPLVITEEEIAKALEIIKAAVAELPNLKGAAEDKVVPPPEKKVKITLEN.

Lysine 280 carries the post-translational modification N6-(pyridoxal phosphate)lysine.

This sequence belongs to the class-III pyridoxal-phosphate-dependent aminotransferase family. Requires pyridoxal 5'-phosphate as cofactor.

The protein resides in the cytoplasm. It carries out the reaction a 2-oxocarboxylate + L-ornithine = L-glutamate 5-semialdehyde + an L-alpha-amino acid. It participates in amino-acid biosynthesis; L-proline biosynthesis; L-glutamate 5-semialdehyde from L-ornithine: step 1/1. The chain is Ornithine aminotransferase (otaA) from Emericella nidulans (strain FGSC A4 / ATCC 38163 / CBS 112.46 / NRRL 194 / M139) (Aspergillus nidulans).